The chain runs to 578 residues: Zinc finger-containing ubiquitin peptidase 1 (578 aa).

The C2H2-type 1 zinc-finger motif lies at 2–24 (LSCDICGETVTSEPDMKAHLIVH). A C2H2-type 2; atypical zinc finger spans residues 29–52 (IVCPFCKLSGVSYDEMCFHIETAH). C2H2-type zinc fingers lie at residues 154–177 (PECPFCGKIEEHSEDMETHVKTTH) and 193–215 (YDCPMCGLICTNYHILQEHVDLH). Residues 226 to 248 (DRVQCSGDLQLAHQLQQEEDRKR) form an MIU region. Residues 249–274 (RSEESRQEIEEFQKLQRQYGLDNSGG) are zUBD/ZHA. An N6-acetyllysine modification is found at Lys262. Catalysis depends on Cys360, which acts as the Nucleophile. Catalysis depends on His491, which acts as the Proton acceptor. Residue Asp512 is part of the active site.

This sequence belongs to the peptidase C78 family. ZUFSP subfamily. As to quaternary structure, interacts with RPA1 and RPA2.

The protein resides in the cytoplasm. It is found in the nucleus. The catalysed reaction is Thiol-dependent hydrolysis of ester, thioester, amide, peptide and isopeptide bonds formed by the C-terminal Gly of ubiquitin (a 76-residue protein attached to proteins as an intracellular targeting signal).. In terms of biological role, deubiquitinase with endodeubiquitinase activity that specifically interacts with and cleaves 'Lys-63'-linked long polyubiquitin chains. Shows only weak activity against 'Lys-11' and 'Lys-48'-linked chains. Plays an important role in genome stability pathways, functioning to prevent spontaneous DNA damage and also promote cellular survival in response to exogenous DNA damage. Modulates the ubiquitination status of replication protein A (RPA) complex proteins in response to replication stress. This chain is Zinc finger-containing ubiquitin peptidase 1, found in Macaca fascicularis (Crab-eating macaque).